We begin with the raw amino-acid sequence, 372 residues long: N-methyl-L-tryptophan oxidase (372 aa).

4–34 (DLIIIGSGSVGAAAGYYATRAGLKVLMTDAH) is a binding site for FAD. At Cys307 the chain carries S-8alpha-FAD cysteine.

Belongs to the MSOX/MTOX family. MTOX subfamily. Monomer. The cofactor is FAD.

The catalysed reaction is N(alpha)-methyl-L-tryptophan + O2 + H2O = L-tryptophan + formaldehyde + H2O2. Catalyzes the oxidative demethylation of N-methyl-L-tryptophan. The sequence is that of N-methyl-L-tryptophan oxidase from Salmonella agona (strain SL483).